The following is a 188-amino-acid chain: Elongation factor P (188 aa).

The protein belongs to the elongation factor P family.

The protein localises to the cytoplasm. The protein operates within protein biosynthesis; polypeptide chain elongation. Involved in peptide bond synthesis. Stimulates efficient translation and peptide-bond synthesis on native or reconstituted 70S ribosomes in vitro. Probably functions indirectly by altering the affinity of the ribosome for aminoacyl-tRNA, thus increasing their reactivity as acceptors for peptidyl transferase. The chain is Elongation factor P from Anaplasma phagocytophilum (strain HZ).